Here is a 346-residue protein sequence, read N- to C-terminus: 3',5'-cyclic-nucleotide phosphodiesterase (346 aa).

The protein belongs to the cyclic nucleotide phosphodiesterase class-II family.

It carries out the reaction a nucleoside 3',5'-cyclic phosphate + H2O = a nucleoside 5'-phosphate + H(+). The polypeptide is 3',5'-cyclic-nucleotide phosphodiesterase (cgs2) (Schizosaccharomyces pombe (strain 972 / ATCC 24843) (Fission yeast)).